Reading from the N-terminus, the 663-residue chain is Nuclear receptor-binding protein homolog (663 aa).

The segment covering 1–14 (MSNSQANAGSSGSA) has biased composition (low complexity). A disordered region spans residues 1–112 (MSNSQANAGS…SEDESEILEE (112 aa)). Polar residues predominate over residues 19-46 (LNPSGSATLVPNLTTTNASSQATPASTI). Low complexity-rich tracts occupy residues 47–57 (PQQQQPQQSQP) and 81–94 (VVVA…NLDS). The span at 101–111 (DDSEDESEILE) shows a compositional bias: acidic residues. The Protein kinase domain occupies 122 to 392 (REEVDQRDVP…ANDLLFHPLL (271 aa)). Disordered regions lie at residues 481 to 505 (PNFR…EPVD) and 638 to 663 (YVPQ…TTSN). Phosphoserine is present on residues Ser-489, Ser-495, and Ser-498. A Phosphothreonine modification is found at Thr-500. The segment covering 641–652 (QDQQQYQQQQQE) has biased composition (low complexity).

It belongs to the protein kinase superfamily. Ser/Thr protein kinase family.

It is found in the cytoplasm. The protein resides in the cell cortex. Functionally, may play a role in subcellular trafficking between the endoplasmic reticulum and Golgi apparatus. The chain is Nuclear receptor-binding protein homolog from Drosophila pseudoobscura pseudoobscura (Fruit fly).